The primary structure comprises 178 residues: Large ribosomal subunit protein uL10 (178 aa).

This sequence belongs to the universal ribosomal protein uL10 family. Part of the ribosomal stalk of the 50S ribosomal subunit. The N-terminus interacts with L11 and the large rRNA to form the base of the stalk. The C-terminus forms an elongated spine to which L12 dimers bind in a sequential fashion forming a multimeric L10(L12)X complex.

In terms of biological role, forms part of the ribosomal stalk, playing a central role in the interaction of the ribosome with GTP-bound translation factors. The protein is Large ribosomal subunit protein uL10 of Dictyoglomus thermophilum (strain ATCC 35947 / DSM 3960 / H-6-12).